Consider the following 169-residue polypeptide: NAD(P)H-quinone oxidoreductase subunit J, chloroplastic (169 aa).

The protein belongs to the complex I 30 kDa subunit family. As to quaternary structure, NDH is composed of at least 16 different subunits, 5 of which are encoded in the nucleus.

Its subcellular location is the plastid. The protein localises to the chloroplast thylakoid membrane. The catalysed reaction is a plastoquinone + NADH + (n+1) H(+)(in) = a plastoquinol + NAD(+) + n H(+)(out). It carries out the reaction a plastoquinone + NADPH + (n+1) H(+)(in) = a plastoquinol + NADP(+) + n H(+)(out). In terms of biological role, NDH shuttles electrons from NAD(P)H:plastoquinone, via FMN and iron-sulfur (Fe-S) centers, to quinones in the photosynthetic chain and possibly in a chloroplast respiratory chain. The immediate electron acceptor for the enzyme in this species is believed to be plastoquinone. Couples the redox reaction to proton translocation, and thus conserves the redox energy in a proton gradient. The sequence is that of NAD(P)H-quinone oxidoreductase subunit J, chloroplastic from Staurastrum punctulatum (Green alga).